The sequence spans 349 residues: Cobalt-precorrin-5B C(1)-methyltransferase (349 aa).

Belongs to the CbiD family.

The catalysed reaction is Co-precorrin-5B + S-adenosyl-L-methionine = Co-precorrin-6A + S-adenosyl-L-homocysteine. It participates in cofactor biosynthesis; adenosylcobalamin biosynthesis; cob(II)yrinate a,c-diamide from sirohydrochlorin (anaerobic route): step 6/10. In terms of biological role, catalyzes the methylation of C-1 in cobalt-precorrin-5B to form cobalt-precorrin-6A. The sequence is that of Cobalt-precorrin-5B C(1)-methyltransferase from Saccharolobus solfataricus (strain ATCC 35092 / DSM 1617 / JCM 11322 / P2) (Sulfolobus solfataricus).